Consider the following 433-residue polypeptide: Signal recognition particle 54 kDa protein (433 aa).

GTP contacts are provided by residues 100–107 (GLQGSGKT), 180–184 (DTAGR), and 238–241 (TKFD).

It belongs to the GTP-binding SRP family. SRP54 subfamily. In terms of assembly, part of the signal recognition particle protein translocation system, which is composed of SRP and FtsY. Archaeal SRP consists of a 7S RNA molecule of 300 nucleotides and two protein subunits: SRP54 and SRP19.

The protein resides in the cytoplasm. It catalyses the reaction GTP + H2O = GDP + phosphate + H(+). In terms of biological role, involved in targeting and insertion of nascent membrane proteins into the cytoplasmic membrane. Binds to the hydrophobic signal sequence of the ribosome-nascent chain (RNC) as it emerges from the ribosomes. The SRP-RNC complex is then targeted to the cytoplasmic membrane where it interacts with the SRP receptor FtsY. This chain is Signal recognition particle 54 kDa protein, found in Archaeoglobus fulgidus (strain ATCC 49558 / DSM 4304 / JCM 9628 / NBRC 100126 / VC-16).